The following is a 210-amino-acid chain: Imidazole glycerol phosphate synthase subunit HisH (210 aa).

Residues 1-210 (MIAILDYGMG…KLLENFIRFI (210 aa)) enclose the Glutamine amidotransferase type-1 domain. Catalysis depends on cysteine 79, which acts as the Nucleophile. Active-site residues include histidine 191 and glutamate 193.

Heterodimer of HisH and HisF.

The protein localises to the cytoplasm. The enzyme catalyses 5-[(5-phospho-1-deoxy-D-ribulos-1-ylimino)methylamino]-1-(5-phospho-beta-D-ribosyl)imidazole-4-carboxamide + L-glutamine = D-erythro-1-(imidazol-4-yl)glycerol 3-phosphate + 5-amino-1-(5-phospho-beta-D-ribosyl)imidazole-4-carboxamide + L-glutamate + H(+). It carries out the reaction L-glutamine + H2O = L-glutamate + NH4(+). It participates in amino-acid biosynthesis; L-histidine biosynthesis; L-histidine from 5-phospho-alpha-D-ribose 1-diphosphate: step 5/9. In terms of biological role, IGPS catalyzes the conversion of PRFAR and glutamine to IGP, AICAR and glutamate. The HisH subunit catalyzes the hydrolysis of glutamine to glutamate and ammonia as part of the synthesis of IGP and AICAR. The resulting ammonia molecule is channeled to the active site of HisF. This is Imidazole glycerol phosphate synthase subunit HisH from Leptospira interrogans serogroup Icterohaemorrhagiae serovar copenhageni (strain Fiocruz L1-130).